The sequence spans 413 residues: 1-deoxy-D-xylulose 5-phosphate reductoisomerase (413 aa).

8 residues coordinate NADPH: Thr28, Gly29, Ser30, Ile31, Gly54, Arg55, Asn56, and Asn142. Lys143 is a binding site for 1-deoxy-D-xylulose 5-phosphate. Glu144 contributes to the NADPH binding site. Asp168 lines the Mn(2+) pocket. 4 residues coordinate 1-deoxy-D-xylulose 5-phosphate: Ser169, Glu170, Ser194, and His217. Residue Glu170 participates in Mn(2+) binding. Gly223 is an NADPH binding site. Residues Ser230, Asn235, Lys236, and Glu239 each coordinate 1-deoxy-D-xylulose 5-phosphate. Glu239 is a binding site for Mn(2+).

It belongs to the DXR family. Mg(2+) serves as cofactor. Requires Mn(2+) as cofactor.

It carries out the reaction 2-C-methyl-D-erythritol 4-phosphate + NADP(+) = 1-deoxy-D-xylulose 5-phosphate + NADPH + H(+). It functions in the pathway isoprenoid biosynthesis; isopentenyl diphosphate biosynthesis via DXP pathway; isopentenyl diphosphate from 1-deoxy-D-xylulose 5-phosphate: step 1/6. Catalyzes the NADPH-dependent rearrangement and reduction of 1-deoxy-D-xylulose-5-phosphate (DXP) to 2-C-methyl-D-erythritol 4-phosphate (MEP). The chain is 1-deoxy-D-xylulose 5-phosphate reductoisomerase from Thermosynechococcus vestitus (strain NIES-2133 / IAM M-273 / BP-1).